Consider the following 447-residue polypeptide: Probable rhamnogalacturonase C (447 aa).

The first 19 residues, 1-19, serve as a signal peptide directing secretion; that stretch reads MQVKLFYTLALWAPILVSA. Residues asparagine 37 and asparagine 65 are each glycosylated (N-linked (GlcNAc...) asparagine). Cysteine 40 and cysteine 66 are disulfide-bonded. The active-site Proton donor is aspartate 217. Cysteines 219 and 236 form a disulfide. Residues asparagine 237 and asparagine 252 are each glycosylated (N-linked (GlcNAc...) asparagine). Histidine 291 is a catalytic residue. An N-linked (GlcNAc...) asparagine glycan is attached at asparagine 316. Intrachain disulfides connect cysteine 338-cysteine 344 and cysteine 366-cysteine 375.

The protein belongs to the glycosyl hydrolase 28 family.

It is found in the secreted. Pectinolytic enzymes consist of four classes of enzymes: pectine lyase, polygalacturonase, pectin methylesterase and rhamnogalacturonase. Hydrolyzes alpha-D-galacturonopyranosyl-(1,2)-alpha-L-rhamnopyranosyl linkages in the backbone of the hairy regions of pectins. This is Probable rhamnogalacturonase C (rhgC) from Aspergillus flavus (strain ATCC 200026 / FGSC A1120 / IAM 13836 / NRRL 3357 / JCM 12722 / SRRC 167).